We begin with the raw amino-acid sequence, 988 residues long: Little elongation complex subunit 2 (988 aa).

Residue Ser322 is modified to Phosphoserine. 2 disordered regions span residues Phe402 to Pro422 and Val500 to Ser587. A compositionally biased stretch (low complexity) spans Pro413–Pro422. Residues Asn534–Asp547 show a composition bias toward basic and acidic residues. Residues Asn563–Ala576 show a composition bias toward low complexity. Ser587 is modified (phosphoserine). Phosphothreonine is present on Thr589. 3 disordered regions span residues Asp604–Glu633, Pro673–Ala706, and Ala942–Ser968. A compositionally biased stretch (low complexity) spans Asn615–Thr629.

It belongs to the ICE2 family. As to quaternary structure, component of the little elongation complex (LEC), at least composed of ELL (ELL, ELL2 or ELL3), ZC3H8, ICE1 and ICE2. Interacts with ICE1 (via C-terminus domain). Interacts with ELL. Expressed in brain, kidney, liver and testis.

It localises to the nucleus. Component of the little elongation complex (LEC), a complex required to regulate small nuclear RNA (snRNA) gene transcription by RNA polymerase II and III. This chain is Little elongation complex subunit 2 (Ice2), found in Mus musculus (Mouse).